A 628-amino-acid polypeptide reads, in one-letter code: UvrABC system protein C (628 aa).

The region spanning 20 to 99 (TSAGVYLMRD…IKTHKPRYNV (80 aa)) is the GIY-YIG domain. One can recognise a UVR domain in the interval 209–244 (AELLAQLEDQMQTAAAAMNFEHAARLRDRITGLNQL).

The protein belongs to the UvrC family. As to quaternary structure, interacts with UvrB in an incision complex.

Its subcellular location is the cytoplasm. The UvrABC repair system catalyzes the recognition and processing of DNA lesions. UvrC both incises the 5' and 3' sides of the lesion. The N-terminal half is responsible for the 3' incision and the C-terminal half is responsible for the 5' incision. This Gloeobacter violaceus (strain ATCC 29082 / PCC 7421) protein is UvrABC system protein C.